Reading from the N-terminus, the 118-residue chain is Class I hydrophobin 1 (118 aa).

The first 20 residues, 1 to 20 (MFARLSTALLAFTLATAVVA), serve as a signal peptide directing secretion. 4 disulfides stabilise this stretch: C34–C97, C41–C91, C42–C77, and C98–C111. Residue N54 is glycosylated (N-linked (GlcNAc...) asparagine). N115 carries an N-linked (GlcNAc...) asparagine glycan.

The protein belongs to the fungal hydrophobin family. Self-assembles to form functional amyloid fibrils called rodlets. Self-assembly into fibrillar rodlets occurs spontaneously at hydrophobic:hydrophilic interfaces and the rodlets further associate laterally to form amphipathic monolayers.

It localises to the secreted. The protein resides in the cell wall. Aerial growth, conidiation, and dispersal of filamentous fungi in the environment rely upon a capability of their secreting small amphipathic proteins called hydrophobins (HPBs) with low sequence identity. Class I can self-assemble into an outermost layer of rodlet bundles on aerial cell surfaces, conferring cellular hydrophobicity that supports fungal growth, development and dispersal; whereas Class II form highly ordered films at water-air interfaces through intermolecular interactions but contribute nothing to the rodlet structure. The polypeptide is Class I hydrophobin 1 (Coprinopsis cinerea (strain Okayama-7 / 130 / ATCC MYA-4618 / FGSC 9003) (Inky cap fungus)).